We begin with the raw amino-acid sequence, 1136 residues long: Nitric oxide synthase, inducible (1136 aa).

Cysteine 107 and cysteine 112 together coordinate Zn(2+). Cysteine 197 contributes to the heme b binding site. L-arginine contacts are provided by glutamine 260, tryptophan 369, tyrosine 370, and glutamate 374. (6R)-L-erythro-5,6,7,8-tetrahydrobiopterin contacts are provided by arginine 378, valine 459, tryptophan 460, and phenylalanine 473. Tyrosine 488 provides a ligand contact to heme b. The interval 512 to 532 is calmodulin-binding; it reads LSILAKAVLLASLLLQKTMAA. The 139-residue stretch at 536–674 folds into the Flavodoxin-like domain; sequence VTVIYATETG…AFRTWAVTAF (139 aa). 11 residues coordinate FMN: threonine 542, glutamate 543, threonine 544, lysine 546, serine 547, serine 588, threonine 589, serine 625, cysteine 632, glutamate 658, and glutamine 662. The region spanning 727–967 is the FAD-binding FR-type domain; it reads KNVIPMKLKF…VRSADGFRLP (241 aa). Arginine 747 is an NADP(+) binding site. FAD contacts are provided by histidine 769, arginine 903, tyrosine 905, serine 906, threonine 921, alanine 923, tyrosine 927, valine 940, cysteine 941, and serine 942. Residues threonine 981, arginine 1014, serine 1043, arginine 1044, lysine 1050, tyrosine 1052, glutamine 1054, and aspartate 1087 each coordinate NADP(+).

The protein belongs to the NOS family. Homodimer. The cofactor is heme b. It depends on FAD as a cofactor. FMN serves as cofactor. (6R)-L-erythro-5,6,7,8-tetrahydrobiopterin is required as a cofactor.

It localises to the cytoplasm. The protein localises to the cytosol. It catalyses the reaction 2 L-arginine + 3 NADPH + 4 O2 + H(+) = 2 L-citrulline + 2 nitric oxide + 3 NADP(+) + 4 H2O. Not stimulated by calcium/calmodulin. In terms of biological role, produces nitric oxide (NO) which is a messenger molecule with diverse functions throughout the body. NO may serve as both a paracrine and autocrine signal for modulating osteoclast bone resorption. Also has nitrosylase activity and mediates cysteine S-nitrosylation of cytoplasmic target proteins such COX2. The sequence is that of Nitric oxide synthase, inducible (NOS2) from Gallus gallus (Chicken).